Consider the following 142-residue polypeptide: Hemoglobin subunit alpha-1 (142 aa).

Ser-1 bears the N-acetylserine mark. Residues 1–142 enclose the Globin domain; sequence SLSVKDKAAV…VALALAERYR (142 aa). Position 59 (His-59) interacts with O2. Heme b is bound at residue His-88.

Belongs to the globin family. In terms of assembly, hb 1 is a heterotetramer of two alpha-1 and two beta-1 chains. In terms of tissue distribution, red blood cells.

In terms of biological role, involved in oxygen transport from gills to the various peripheral tissues. The polypeptide is Hemoglobin subunit alpha-1 (hba1) (Gobionotothen gibberifrons (Humped rockcod)).